The primary structure comprises 574 residues: Streptolysin O (574 aa).

Residues 1 to 36 (MKDMSNKKIFKKYSRVAGLLTAALIVGNLVTANADS) form the signal peptide. The span at 37–52 (NKQNTANTETTTTNEQ) shows a compositional bias: low complexity. 2 disordered regions span residues 37–64 (NKQN…TTEK) and 84–111 (KEMP…HTEE). Basic and acidic residues predominate over residues 53–64 (PKPESSELTTEK). 4 beta stranded membrane-spanning segments follow: residues 263–276 (KSQI…NSKI), 283–292 (IDFKSISKGE), 361–370 (SNDVEAAFSA), and 378–390 (KTNG…LENS). A Conserved undecapeptide motif is present at residues 532–542 (ECTGLAWEWWR). Positions 564–565 (TL) match the Cholesterol binding motif.

Belongs to the cholesterol-dependent cytolysin family. As to quaternary structure, homooligomeric pore complex of 35 to 50 subunits; when inserted in the host membrane.

It is found in the secreted. Its subcellular location is the host cell membrane. Its function is as follows. A cholesterol-dependent toxin that causes cytolysis by forming pores in cholesterol containing host membranes. After binding to target membranes, the protein undergoes a major conformation change, leading to its insertion in the host membrane and formation of an oligomeric pore complex. Cholesterol is required for binding to host membranes, membrane insertion and pore formation; cholesterol binding is mediated by a Thr-Leu pair in the C-terminus. Can be reversibly inactivated by oxidation. The protein is Streptolysin O (slo) of Streptococcus dysgalactiae subsp. equisimilis (Streptococcus equisimilis).